The chain runs to 303 residues: D-alanine--D-alanine ligase (303 aa).

The ATP-grasp domain occupies 102–298; it reads RILLAAAGLP…YPELCDWMVR (197 aa). An ATP-binding site is contributed by 128-181; that stretch reads PLPAPYVIKPVAEGSSVGVEIVRTGDNRRAEIARTWRFGKEALVESFIPGRELT. Mg(2+) is bound by residues aspartate 251, glutamate 265, and asparagine 267.

The protein belongs to the D-alanine--D-alanine ligase family. Requires Mg(2+) as cofactor. Mn(2+) is required as a cofactor.

It is found in the cytoplasm. The catalysed reaction is 2 D-alanine + ATP = D-alanyl-D-alanine + ADP + phosphate + H(+). The protein operates within cell wall biogenesis; peptidoglycan biosynthesis. Its function is as follows. Cell wall formation. This Gluconobacter oxydans (strain 621H) (Gluconobacter suboxydans) protein is D-alanine--D-alanine ligase.